The sequence spans 435 residues: 3-phosphoshikimate 1-carboxyvinyltransferase (435 aa).

Positions 21, 22, and 26 each coordinate 3-phosphoshikimate. Lysine 21 is a phosphoenolpyruvate binding site. Positions 98 and 126 each coordinate phosphoenolpyruvate. Positions 169, 170, 171, 197, 312, and 339 each coordinate 3-phosphoshikimate. Residue glutamine 171 coordinates phosphoenolpyruvate. Residue aspartate 312 is the Proton acceptor of the active site. Positions 343, 386, and 412 each coordinate phosphoenolpyruvate.

Belongs to the EPSP synthase family. In terms of assembly, monomer.

The protein localises to the cytoplasm. It catalyses the reaction 3-phosphoshikimate + phosphoenolpyruvate = 5-O-(1-carboxyvinyl)-3-phosphoshikimate + phosphate. The protein operates within metabolic intermediate biosynthesis; chorismate biosynthesis; chorismate from D-erythrose 4-phosphate and phosphoenolpyruvate: step 6/7. In terms of biological role, catalyzes the transfer of the enolpyruvyl moiety of phosphoenolpyruvate (PEP) to the 5-hydroxyl of shikimate-3-phosphate (S3P) to produce enolpyruvyl shikimate-3-phosphate and inorganic phosphate. The protein is 3-phosphoshikimate 1-carboxyvinyltransferase of Clostridium beijerinckii (strain ATCC 51743 / NCIMB 8052) (Clostridium acetobutylicum).